We begin with the raw amino-acid sequence, 70 residues long: Protein SlyX homolog (70 aa).

This sequence belongs to the SlyX family.

The sequence is that of Protein SlyX homolog from Shewanella frigidimarina (strain NCIMB 400).